Here is a 132-residue protein sequence, read N- to C-terminus: Histone H2A.2 (132 aa).

Ser2 carries the post-translational modification N-acetylserine. An N6-acetyllysine mark is found at Lys5 and Lys8. An N6-succinyllysine mark is found at Lys14 and Lys22. Gln106 bears the N5-methylglutamine mark. N6-malonyllysine is present on Lys120. Lys127 is covalently cross-linked (Glycyl lysine isopeptide (Lys-Gly) (interchain with G-Cter in SUMO)). Ser129 is modified (phosphoserine). Positions 129-130 (SQ) match the [ST]-Q motif motif.

The protein belongs to the histone H2A family. The nucleosome is a histone octamer containing two molecules each of H2A, H2B, H3 and H4 assembled in one H3-H4 heterotetramer and two H2A-H2B heterodimers. The octamer wraps approximately 147 bp of DNA. Interacts with NAP1. Phosphorylated to form H2AS128ph (gamma-H2A) in response to DNA double-strand breaks (DSBs) generated by exogenous genotoxic agents and by stalled replication forks. Phosphorylation is dependent on the DNA damage checkpoint kinases MEC1/ATR and TEL1/ATM, spreads on either side of a detected DSB site and may mark the surrounding chromatin for recruitment of proteins required for DNA damage signaling and repair. Gamma-H2A interacts with ARP4, a shared component of the NuA4 histone acetyltransferase complex and the INO80 and SWR1 chromatin remodeling complexes, and serves to recruit first NuA4, mediating histone H4 acetylation, and subsequently the INO80/SWR1 complexes, facilitating DNA resection, to DSB sites. Gamma-H2A is required for sequestering cohesin around the break site, which is important for efficient post-replicative double-strand break repair by homologous recombination, holding the damaged chromatid close to its undamaged sister template. Gamma-H2A is removed from the DNA prior to the strand invasion-primer extension step of the repair process and subsequently dephosphorylated by PPH3, a component of the histone H2A phosphatase complex (HTP-C). Dephosphorylation is necessary for efficient recovery from the DNA damage checkpoint. Post-translationally, N-acetylated by NAT4. In terms of processing, acetylated by ESA1, a component of the NuA4 histone acetyltransferase (HAT) complex, to form H2AK4ac and H2AK7ac. Glutamine methylation at Gln-106 (H2AQ105me) by NOP1 is specifically dedicated to polymerase I. It is present at 35S ribosomal DNA locus and impairs binding of the FACT complex. Post-translationally, sumoylated to from H2AK126su. May lead to transcriptional repression.

It localises to the nucleus. Its subcellular location is the chromosome. Core component of nucleosome which plays a central role in DNA double strand break (DSB) repair. Nucleosomes wrap and compact DNA into chromatin, limiting DNA accessibility to the cellular machineries which require DNA as a template. Histones thereby play a central role in transcription regulation, DNA repair, DNA replication and chromosomal stability. DNA accessibility is regulated via a complex set of post-translational modifications of histones, also called histone code, and nucleosome remodeling. In Saccharomyces cerevisiae (strain ATCC 204508 / S288c) (Baker's yeast), this protein is Histone H2A.2 (HTA2).